The chain runs to 474 residues: Chromosomal replication initiator protein DnaA (474 aa).

The interval 1–91 (MSEELWQRCL…STRASTPAAS (91 aa)) is domain I, interacts with DnaA modulators. The tract at residues 89 to 138 (AASYFNGSSSSSSNGPITTPAAAPAPRQPESDSRPQPTSLGGARKHRSNL) is disordered. The segment at 91–136 (SYFNGSSSSSSNGPITTPAAAPAPRQPESDSRPQPTSLGGARKHRS) is domain II. Low complexity predominate over residues 96-113 (SSSSSSNGPITTPAAAPA). A domain III, AAA+ region region spans residues 137 to 354 (NLNTGFTFST…GALRRVIAHV (218 aa)). The ATP site is built by Gly182, Gly184, Lys185, and Thr186. The interval 355 to 474 (RFTGAQIDIG…YLNLLRTLTS (120 aa)) is domain IV, binds dsDNA.

The protein belongs to the DnaA family. Oligomerizes as a right-handed, spiral filament on DNA at oriC.

It localises to the cytoplasm. Plays an essential role in the initiation and regulation of chromosomal replication. ATP-DnaA binds to the origin of replication (oriC) to initiate formation of the DNA replication initiation complex once per cell cycle. Binds the DnaA box (a 9 base pair repeat at the origin) and separates the double-stranded (ds)DNA. Forms a right-handed helical filament on oriC DNA; dsDNA binds to the exterior of the filament while single-stranded (ss)DNA is stabiized in the filament's interior. The ATP-DnaA-oriC complex binds and stabilizes one strand of the AT-rich DNA unwinding element (DUE), permitting loading of DNA polymerase. After initiation quickly degrades to an ADP-DnaA complex that is not apt for DNA replication. Binds acidic phospholipids. The protein is Chromosomal replication initiator protein DnaA of Alcanivorax borkumensis (strain ATCC 700651 / DSM 11573 / NCIMB 13689 / SK2).